The sequence spans 148 residues: UPF0134 protein MPN_204 (148 aa).

It belongs to the UPF0134 family.

In Mycoplasma pneumoniae (strain ATCC 29342 / M129 / Subtype 1) (Mycoplasmoides pneumoniae), this protein is UPF0134 protein MPN_204.